The following is an 86-amino-acid chain: Antitoxin VapB33 (86 aa).

Its function is as follows. Antitoxin component of a type II toxin-antitoxin (TA) system. Upon expression in M.smegmatis neutralizes the effect of cognate toxin VapC33. The sequence is that of Antitoxin VapB33 (vapB33) from Mycobacterium tuberculosis (strain ATCC 25618 / H37Rv).